The following is a 141-amino-acid chain: HTH-type transcriptional repressor NsrR (141 aa).

Residues 2–129 enclose the HTH rrf2-type domain; that stretch reads QLTSFTDYAL…DECTIESLLS (128 aa). A DNA-binding region (H-T-H motif) is located at residues 28 to 51; sequence ITEVTDLFGVSRNHMVKVINRLGQ. [2Fe-2S] cluster-binding residues include cysteine 91, cysteine 96, and cysteine 102.

[2Fe-2S] cluster is required as a cofactor.

Its function is as follows. Nitric oxide-sensitive repressor of genes involved in protecting the cell against nitrosative stress. May require iron for activity. This Vibrio parahaemolyticus serotype O3:K6 (strain RIMD 2210633) protein is HTH-type transcriptional repressor NsrR.